A 365-amino-acid chain; its full sequence is Probable dual-specificity RNA methyltransferase RlmN (365 aa).

E108 functions as the Proton acceptor in the catalytic mechanism. Residues 114–352 (YPDRNTVCIS…SCTVRDTRGR (239 aa)) form the Radical SAM core domain. Cysteines 121 and 358 form a disulfide. Residues C128, C132, and C135 each contribute to the [4Fe-4S] cluster site. Residues 179 to 180 (GE), S213, 236 to 238 (SLH), and N315 contribute to the S-adenosyl-L-methionine site. C358 acts as the S-methylcysteine intermediate in catalysis.

This sequence belongs to the radical SAM superfamily. RlmN family. The cofactor is [4Fe-4S] cluster.

The protein localises to the cytoplasm. The catalysed reaction is adenosine(2503) in 23S rRNA + 2 reduced [2Fe-2S]-[ferredoxin] + 2 S-adenosyl-L-methionine = 2-methyladenosine(2503) in 23S rRNA + 5'-deoxyadenosine + L-methionine + 2 oxidized [2Fe-2S]-[ferredoxin] + S-adenosyl-L-homocysteine. The enzyme catalyses adenosine(37) in tRNA + 2 reduced [2Fe-2S]-[ferredoxin] + 2 S-adenosyl-L-methionine = 2-methyladenosine(37) in tRNA + 5'-deoxyadenosine + L-methionine + 2 oxidized [2Fe-2S]-[ferredoxin] + S-adenosyl-L-homocysteine. Its function is as follows. Specifically methylates position 2 of adenine 2503 in 23S rRNA and position 2 of adenine 37 in tRNAs. The polypeptide is Probable dual-specificity RNA methyltransferase RlmN (Mycolicibacterium gilvum (strain PYR-GCK) (Mycobacterium gilvum (strain PYR-GCK))).